The sequence spans 484 residues: Pentatricopeptide repeat-containing protein At1g09190 (484 aa).

10 PPR repeats span residues 66–100 (NVLV…GIWA), 101–135 (DEYT…GFHR), 136–166 (LGKI…MSER), 167–197 (NVVV…MSER), 198–232 (SIVS…GFDP), 233–267 (DEAT…GLFK), 269–299 (FITV…MQRR), 300–334 (NVVS…GKVA), 336–366 (NEAT…MMER), and 372–406 (RTEH…ANAA). The interval 407-482 (MWGSLLSACR…STGQSTICDV (76 aa)) is type E motif.

This sequence belongs to the PPR family. PCMP-E subfamily.

This chain is Pentatricopeptide repeat-containing protein At1g09190 (PCMP-E70), found in Arabidopsis thaliana (Mouse-ear cress).